The following is a 1175-amino-acid chain: MRLNSIKLSGFKSFAEPTNFMLPGQLVGVVGPNGCGKSNIMDAVRWVLGESKASELRGESMQDVIFNGTTHRKPASRSSVELVFDNSDHRAGGQWGQFGEIAVKRVLTREGNSSYFINNQAVRRRDVQDVFLGTGLGPRAYAIIGQGTISRIIESRPEELRLFLEEAAGVSKYKERRRETENRLSATTENLTRVEDILRELNNNLDRLEKQAEVAAQYNALQSQVTLKQQQLWFLKRAEAEAEQDRVRVEGLQAVNELEERMADIRNNESGLETLRQAHYDASDQVNQAQAKLYESTAEVGKLEAEIRYVLEGRQRVQQRLQQLSEQVLLWNSRREEAEAEIENLEGAGMDAEEQAEMLAAQVEEQSMRLPDLEDALRNAQKADTDQRASVVQVQQQIQVLAAEQRSLDEQRRQFETRFERLRADRNALETPDEARLNNLQSQLQEARELAEMADAVLNELQDSVPQLDEDRRTRQQAVNAEAARHADLSARLEALKALQEKVKTDGKLQPWLAKHGLDGMQGLWSRIAIEPGWENALEAALRERLGALEVGRLDMVRGFLGSGGHDAPPARLAFFSPPQGAPAPAAGRWQHLSDLLRVNDAGLRAVLGDWLQDCYTAPTLEEALSRRSELRPGETVYVPTGHAVSSHSVSFYAQDSEQSGLLARAQEIEHLEKEVRAQALISDESRTALVRAESAYAEASQRLVSARREASESQSRAHELQVETLRLSQLAEQARARNAQISADLAEVEAQLSDIEERRVAAEARFEELDMQLADSQERHAQLGDKVLESERRLNESREQLRTLERQAQEATFSRRSLEARRGELSRTIETASQQARSLADEQQRAQDELTRLTDAAAQGGLQDALDLKMQREQAVAARRSEYDDLTNKLRASDERRQQLEKALDPLRQRITEFQLKEQAARLGLEQYSTLLEEAGADLAAVSQSIAEANVRMHGLQGEIDRLHREIAALGAVNLAALDELKLARERKTFLDAQTEDLTQAMNTLEDAIRKIDAETRELLSGTFETVNGHFGRMFPELFGGGQAKLVITGDEILDSGVQVIAQPPGKKNQTIHLLSGGEKALTAIALVFAIFQLNPAPFCLLDEVDAPLDDANTERYAKLVASMSKSTQFLFISHNKIAMEMAQQLIGVTMQEQGVSRIVAVDMESALSMAELS.

32-39 (PNGCGKSN) lines the ATP pocket. Residues 170–504 (VSKYKERRRE…ALKALQEKVK (335 aa)) adopt a coiled-coil conformation. Positions 524–625 (LWSRIAIEPG…YTAPTLEEAL (102 aa)) constitute an SMC hinge domain. 2 coiled-coil regions span residues 684-918 (DESR…FQLK) and 944-1022 (SQSI…ELLS). The tract at residues 807-849 (RQAQEATFSRRSLEARRGELSRTIETASQQARSLADEQQRAQD) is disordered. Basic and acidic residues predominate over residues 817–828 (RSLEARRGELSR). Residues 829–838 (TIETASQQAR) are compositionally biased toward polar residues. Residues 840 to 849 (LADEQQRAQD) are compositionally biased toward basic and acidic residues.

The protein belongs to the SMC family. As to quaternary structure, homodimer.

The protein resides in the cytoplasm. In terms of biological role, required for chromosome condensation and partitioning. The chain is Chromosome partition protein Smc from Delftia acidovorans (strain DSM 14801 / SPH-1).